The sequence spans 492 residues: Glutamyl-tRNA(Gln) amidotransferase subunit A (492 aa).

Catalysis depends on charge relay system residues Lys-78 and Ser-158. Ser-182 (acyl-ester intermediate) is an active-site residue.

It belongs to the amidase family. GatA subfamily. As to quaternary structure, heterotrimer of A, B and C subunits.

The catalysed reaction is L-glutamyl-tRNA(Gln) + L-glutamine + ATP + H2O = L-glutaminyl-tRNA(Gln) + L-glutamate + ADP + phosphate + H(+). Functionally, allows the formation of correctly charged Gln-tRNA(Gln) through the transamidation of misacylated Glu-tRNA(Gln) in organisms which lack glutaminyl-tRNA synthetase. The reaction takes place in the presence of glutamine and ATP through an activated gamma-phospho-Glu-tRNA(Gln). This is Glutamyl-tRNA(Gln) amidotransferase subunit A from Rhodopseudomonas palustris (strain BisB18).